The sequence spans 493 residues: Ferruginol synthase 1 (493 aa).

Residues 2 to 22 traverse the membrane as a helical segment; the sequence is DSFPLLAALFFILAATWFISF. Residue C437 participates in heme binding.

This sequence belongs to the cytochrome P450 family. It depends on heme as a cofactor. Expressed in leaf glandular trichomes.

It localises to the membrane. The enzyme catalyses abieta-8,11,13-triene + reduced [NADPH--hemoprotein reductase] + O2 = ferruginol + oxidized [NADPH--hemoprotein reductase] + H2O + H(+). It carries out the reaction ferruginol + reduced [NADPH--hemoprotein reductase] + O2 = 11-hydroxyferruginol + oxidized [NADPH--hemoprotein reductase] + H2O + H(+). The catalysed reaction is miltiradiene + 2 reduced [NADPH--hemoprotein reductase] + 2 O2 = 11-oxomiltiradiene + 2 oxidized [NADPH--hemoprotein reductase] + 3 H2O + 2 H(+). It participates in secondary metabolite biosynthesis; terpenoid biosynthesis. Its function is as follows. Monooxygenase involved in the biosynthesis of labdane-related diterpenes natural products. Catalyzes the oxidation of abietatriene to produce ferruginol. Catalyzes the oxidation of ferruginol at C-12 to produce 11-hydroxyferruginol. Ferruginol and 11-hydroxyferruginol are intermediates in the biosynthesis of carnosate, a potent antioxidant. May also convert miltiradiene into 11-oxomiltiradiene. This chain is Ferruginol synthase 1, found in Rosmarinus officinalis (Rosemary).